The sequence spans 848 residues: Leucine--tRNA ligase (848 aa).

A compositionally biased stretch (basic and acidic residues) spans 1–16 (MCPEQPHDTRAERDEM). The disordered stretch occupies residues 1 to 30 (MCPEQPHDTRAERDEMSEQTQQAAQPAETA). Residues 18-30 (EQTQQAAQPAETA) show a composition bias toward low complexity. The 'HIGH' region motif lies at 69 to 79 (PYPSGDLHMGH). A 'KMSKS' region motif is present at residues 614–618 (KMSKS). Residue K617 coordinates ATP.

It belongs to the class-I aminoacyl-tRNA synthetase family.

It is found in the cytoplasm. It carries out the reaction tRNA(Leu) + L-leucine + ATP = L-leucyl-tRNA(Leu) + AMP + diphosphate. The polypeptide is Leucine--tRNA ligase (Nocardioides sp. (strain ATCC BAA-499 / JS614)).